Consider the following 834-residue polypeptide: Periplasmic nitrate reductase (834 aa).

The segment at residues 1–31 (MTGELTRREMLKAHAAGIAAATAGIALPAAA) is a signal peptide (tat-type signal). Residues 43-99 (ITWSKAPCRFCGTGCGVMVGVKEGQVVATHGDMQAEVNRGLNCIKGYFLSKIMYGTD) enclose the 4Fe-4S Mo/W bis-MGD-type domain. 4 residues coordinate [4Fe-4S] cluster: cysteine 50, cysteine 53, cysteine 57, and cysteine 85. Mo-bis(molybdopterin guanine dinucleotide) is bound by residues lysine 87, glutamine 154, asparagine 179, cysteine 183, 216–223 (WGSNMAEM), 247–251 (STFTH), 266–268 (GTD), methionine 377, glutamine 381, asparagine 487, 513–514 (SD), lysine 536, aspartate 563, and 723–732 (TGRVLEHWHS). Tryptophan 799 contributes to the substrate binding site. Asparagine 807 and lysine 824 together coordinate Mo-bis(molybdopterin guanine dinucleotide).

The protein belongs to the prokaryotic molybdopterin-containing oxidoreductase family. NasA/NapA/NarB subfamily. Component of the periplasmic nitrate reductase NapAB complex composed of NapA and NapB. [4Fe-4S] cluster serves as cofactor. The cofactor is Mo-bis(molybdopterin guanine dinucleotide). In terms of processing, predicted to be exported by the Tat system. The position of the signal peptide cleavage has not been experimentally proven.

Its subcellular location is the periplasm. The enzyme catalyses 2 Fe(II)-[cytochrome] + nitrate + 2 H(+) = 2 Fe(III)-[cytochrome] + nitrite + H2O. Catalytic subunit of the periplasmic nitrate reductase complex NapAB. Receives electrons from NapB and catalyzes the reduction of nitrate to nitrite. This Rhizobium meliloti (strain 1021) (Ensifer meliloti) protein is Periplasmic nitrate reductase.